Reading from the N-terminus, the 211-residue chain is Large ribosomal subunit protein bL25 (211 aa).

The segment at 175-211 (VSEPVEQDLGEESETEEEGAEGEKPAESTGEEPGDDE) is disordered. A compositionally biased stretch (acidic residues) spans 179 to 194 (VEQDLGEESETEEEGA).

It belongs to the bacterial ribosomal protein bL25 family. CTC subfamily. As to quaternary structure, part of the 50S ribosomal subunit; part of the 5S rRNA/L5/L18/L25 subcomplex. Contacts the 5S rRNA. Binds to the 5S rRNA independently of L5 and L18.

Its function is as follows. This is one of the proteins that binds to the 5S RNA in the ribosome where it forms part of the central protuberance. In Kocuria rhizophila (strain ATCC 9341 / DSM 348 / NBRC 103217 / DC2201), this protein is Large ribosomal subunit protein bL25.